The primary structure comprises 418 residues: MANKLRNYTINFGPQHPAAHGVLRMILELEGETIVRADPHIGLLHRGTEKLAETKTYLQALPYMDRLDYVSMMVNEQAYCLAVEKLAGIDVPIRAQYIRVMFAEVTRILNHLMGIGSHAFDIGAMTAILYAFRDREELMDLYEAVSGARMHAAYFRPGGVYRDLPDFMPKYESSKFRNAKVLKQLNESREGTMLDFIDAFCERFPKNIDTLETLLTDNRIWKQRTVGIGVVSPERAMQKGFTGVMLRGSGVEWDVRKTQPYEVYDKMDFDIPVGVNGDCYDRYLCRMEEMRQSVRIIKQCSEWLRVNPGPVITTNHKFAPPKRTEMKTGMEDLIHHFKLFTEGMHVPEGETYTAVEHPKGEFGVYIISDGANKPYRLKIRAPGFAHLQGMDEMAKGHMLADVVAIIGTQDIVFGEVDR.

Belongs to the complex I 49 kDa subunit family. In terms of assembly, NDH-1 is composed of 14 different subunits. Subunits NuoB, C, D, E, F, and G constitute the peripheral sector of the complex.

The protein resides in the cell inner membrane. The enzyme catalyses a quinone + NADH + 5 H(+)(in) = a quinol + NAD(+) + 4 H(+)(out). In terms of biological role, NDH-1 shuttles electrons from NADH, via FMN and iron-sulfur (Fe-S) centers, to quinones in the respiratory chain. The immediate electron acceptor for the enzyme in this species is believed to be ubiquinone. Couples the redox reaction to proton translocation (for every two electrons transferred, four hydrogen ions are translocated across the cytoplasmic membrane), and thus conserves the redox energy in a proton gradient. The sequence is that of NADH-quinone oxidoreductase subunit D from Neisseria meningitidis serogroup C / serotype 2a (strain ATCC 700532 / DSM 15464 / FAM18).